We begin with the raw amino-acid sequence, 175 residues long: Large ribosomal subunit protein uL18 (175 aa).

This sequence belongs to the universal ribosomal protein uL18 family. As to quaternary structure, part of the 50S ribosomal subunit. Contacts the 5S and 23S rRNAs.

In terms of biological role, this is one of the proteins that bind and probably mediate the attachment of the 5S RNA into the large ribosomal subunit, where it forms part of the central protuberance. This Methanoculleus marisnigri (strain ATCC 35101 / DSM 1498 / JR1) protein is Large ribosomal subunit protein uL18.